The primary structure comprises 227 residues: 2,3-bisphosphoglycerate-dependent phosphoglycerate mutase (227 aa).

Substrate contacts are provided by residues 7–14, 20–21, R59, 86–89, K97, 113–114, and 182–183; these read RHGFSEWN, TG, ERHY, RR, and GN. Catalysis depends on H8, which acts as the Tele-phosphohistidine intermediate. The Proton donor/acceptor role is filled by E86.

It belongs to the phosphoglycerate mutase family. BPG-dependent PGAM subfamily. Homodimer.

The catalysed reaction is (2R)-2-phosphoglycerate = (2R)-3-phosphoglycerate. It participates in carbohydrate degradation; glycolysis; pyruvate from D-glyceraldehyde 3-phosphate: step 3/5. In terms of biological role, catalyzes the interconversion of 2-phosphoglycerate and 3-phosphoglycerate. The chain is 2,3-bisphosphoglycerate-dependent phosphoglycerate mutase from Pasteurella multocida (strain Pm70).